Reading from the N-terminus, the 563-residue chain is DEAD-box ATP-dependent RNA helicase 25 (563 aa).

A disordered region spans residues 21–57 (KKLTSDEDGSGKLVKDNNKSLKRGREGKSDVDEPLIK). A compositionally biased stretch (basic and acidic residues) spans 23 to 56 (LTSDEDGSGKLVKDNNKSLKRGREGKSDVDEPLI). Residue Ser-25 is modified to Phosphoserine. A Q motif motif is present at residues 80–108 (TRFDQFPLSPLTLKGIEDAGFKTMTVVQE). The Helicase ATP-binding domain maps to 111 to 294 (LPLILQGKDI…HVALKRDHEF (184 aa)). 124 to 131 (AKTGTGKT) provides a ligand contact to ATP. The DEAD box signature appears at 242 to 245 (DEAD). Positions 328-479 (LLKKHITDNV…AVKKVQKGLI (152 aa)) constitute a Helicase C-terminal domain.

Belongs to the DEAD box helicase family.

It carries out the reaction ATP + H2O = ADP + phosphate + H(+). The polypeptide is DEAD-box ATP-dependent RNA helicase 25 (RH25) (Arabidopsis thaliana (Mouse-ear cress)).